Consider the following 119-residue polypeptide: gSG7 salivary protein (119 aa).

2 disulfide bridges follow: Cys-58/Cys-113 and Cys-81/Cys-91.

The protein resides in the secreted. With respect to regulation, the activity is increased in the presence of host properdin (CFP). In terms of biological role, salivary protein that inhibits the alternative pathway of complement system activation in the host while having no inhibitory effect on the classical pathway. Inhibits activity of activated host C3-convertase complex C3bBb (C3-CFB). Enhances accumulation of C3bBb on immobilized properdin. This is gSG7 salivary protein from Anopheles freeborni (Western malaria mosquito).